The chain runs to 235 residues: Phosphoribosylaminoimidazole-succinocarboxamide synthase (235 aa).

The protein belongs to the SAICAR synthetase family.

The catalysed reaction is 5-amino-1-(5-phospho-D-ribosyl)imidazole-4-carboxylate + L-aspartate + ATP = (2S)-2-[5-amino-1-(5-phospho-beta-D-ribosyl)imidazole-4-carboxamido]succinate + ADP + phosphate + 2 H(+). The protein operates within purine metabolism; IMP biosynthesis via de novo pathway; 5-amino-1-(5-phospho-D-ribosyl)imidazole-4-carboxamide from 5-amino-1-(5-phospho-D-ribosyl)imidazole-4-carboxylate: step 1/2. This Streptococcus pneumoniae (strain JJA) protein is Phosphoribosylaminoimidazole-succinocarboxamide synthase.